A 395-amino-acid polypeptide reads, in one-letter code: MAKIIAINAGSSSLKFQLLAMPEETVIAKGLVERIGLKKSIFTIEANGQQHELTEDIPDHAAAVKLLLKDLTGRGIIASLEEIEGIGHRVVHGGEKFNDSVVITDEVLQGIEEVSELAPLHNPANITGIKAFKEVLPNVPAVAVFDTAFHQTMPESAFLYSLPYEYYEKYGIRKYGFHGTSHKYVTHRAAELMETPIEELRILSCHLGNGASIAAVKGGKSIDTSMGFTPLAGVTMGTRSGNIDPALIPYIMEKTGQSVEEVVATLNKKSGLLGITGFSSDLRDIEAAAKEGDERAQVALDVFASRIHKYVGSYAARMGGLDAIVFTAGIGENSATIRERVLKGLSFMGVDVDLEKNNVRGKEAFIEKAGAPVKIIVIPTNEEVMIARDTVRLTS.

Asparagine 8 contributes to the Mg(2+) binding site. Lysine 15 is a binding site for ATP. Residue arginine 89 participates in substrate binding. The active-site Proton donor/acceptor is the aspartate 146. Residues 206 to 210 (HLGNG), 281 to 283 (DLR), and 329 to 333 (GIGEN) contribute to the ATP site. Glutamate 382 lines the Mg(2+) pocket.

The protein belongs to the acetokinase family. As to quaternary structure, homodimer. It depends on Mg(2+) as a cofactor. Requires Mn(2+) as cofactor.

It is found in the cytoplasm. The enzyme catalyses acetate + ATP = acetyl phosphate + ADP. It functions in the pathway metabolic intermediate biosynthesis; acetyl-CoA biosynthesis; acetyl-CoA from acetate: step 1/2. In terms of biological role, catalyzes the formation of acetyl phosphate from acetate and ATP. Can also catalyze the reverse reaction. In Shouchella clausii (strain KSM-K16) (Alkalihalobacillus clausii), this protein is Acetate kinase.